We begin with the raw amino-acid sequence, 332 residues long: Methionyl-tRNA formyltransferase (332 aa).

Position 124 to 127 (124 to 127) interacts with (6S)-5,6,7,8-tetrahydrofolate; the sequence is SLLP.

The protein belongs to the Fmt family.

It catalyses the reaction L-methionyl-tRNA(fMet) + (6R)-10-formyltetrahydrofolate = N-formyl-L-methionyl-tRNA(fMet) + (6S)-5,6,7,8-tetrahydrofolate + H(+). In terms of biological role, attaches a formyl group to the free amino group of methionyl-tRNA(fMet). The formyl group appears to play a dual role in the initiator identity of N-formylmethionyl-tRNA by promoting its recognition by IF2 and preventing the misappropriation of this tRNA by the elongation apparatus. The protein is Methionyl-tRNA formyltransferase of Polynucleobacter asymbioticus (strain DSM 18221 / CIP 109841 / QLW-P1DMWA-1) (Polynucleobacter necessarius subsp. asymbioticus).